We begin with the raw amino-acid sequence, 1676 residues long: DNA-directed RNA polymerase subunit beta'-beta'' (1676 aa).

The DNA-directed RNA polymerase subunit beta' stretch occupies residues 1–582; the sequence is MCDAIQIRLA…FLKTTPGRII (582 aa). Zn(2+)-binding residues include Cys64, Cys66, Cys79, and Cys82. Positions 454, 456, and 458 each coordinate Mg(2+). The segment at 583–1676 is DNA-directed RNA polymerase subunit beta''; the sequence is FYQQAAYHVG…IPAGTGAKYL (1094 aa). Positions 804, 859, 866, and 869 each coordinate Zn(2+).

This sequence in the N-terminal section; belongs to the RNA polymerase beta' chain family. RpoC1 subfamily. In the C-terminal section; belongs to the RNA polymerase beta' chain family. RpoC2 subfamily. In plastids the minimal PEP RNA polymerase catalytic core is composed of four subunits: alpha, beta, beta', and beta''. When a (nuclear-encoded) sigma factor is associated with the core the holoenzyme is formed, which can initiate transcription. Beta' and beta'' are fused in this algae. Requires Mg(2+) as cofactor. Zn(2+) is required as a cofactor.

Its subcellular location is the plastid. The protein localises to the chloroplast. It carries out the reaction RNA(n) + a ribonucleoside 5'-triphosphate = RNA(n+1) + diphosphate. Functionally, DNA-dependent RNA polymerase catalyzes the transcription of DNA into RNA using the four ribonucleoside triphosphates as substrates. This Cyanidioschyzon merolae (strain NIES-3377 / 10D) (Unicellular red alga) protein is DNA-directed RNA polymerase subunit beta'-beta''.